We begin with the raw amino-acid sequence, 64 residues long: Conotoxin Cal6.24 (64 aa).

The signal sequence occupies residues 1 to 22 (MKLTCVMIVAVLVLTVCKVVTS). 3 cysteine pairs are disulfide-bonded: cysteine 32/cysteine 50, cysteine 40/cysteine 54, and cysteine 49/cysteine 60.

Expressed by the venom duct.

The protein localises to the secreted. Probable neurotoxin. This Californiconus californicus (California cone) protein is Conotoxin Cal6.24.